Here is a 128-residue protein sequence, read N- to C-terminus: Phosphoribosyl-AMP cyclohydrolase (128 aa).

Asp89 contacts Mg(2+). Residue Cys90 participates in Zn(2+) binding. Asp91 and Asp93 together coordinate Mg(2+). Zn(2+) is bound by residues Cys106 and Cys113.

Belongs to the PRA-CH family. Homodimer. It depends on Mg(2+) as a cofactor. Zn(2+) serves as cofactor.

It localises to the cytoplasm. The catalysed reaction is 1-(5-phospho-beta-D-ribosyl)-5'-AMP + H2O = 1-(5-phospho-beta-D-ribosyl)-5-[(5-phospho-beta-D-ribosylamino)methylideneamino]imidazole-4-carboxamide. It participates in amino-acid biosynthesis; L-histidine biosynthesis; L-histidine from 5-phospho-alpha-D-ribose 1-diphosphate: step 3/9. Catalyzes the hydrolysis of the adenine ring of phosphoribosyl-AMP. This Pyrobaculum calidifontis (strain DSM 21063 / JCM 11548 / VA1) protein is Phosphoribosyl-AMP cyclohydrolase.